The sequence spans 311 residues: Olfactory receptor 1N1 (311 aa).

Over 1–23 (MENQSSISEFFLRGISAPPEQQQ) the chain is Extracellular. Asn-3 carries an N-linked (GlcNAc...) asparagine glycan. The chain crosses the membrane as a helical span at residues 24–47 (SLFGIFLCMYLVTLTGNLLIILAI). Residues 48 to 55 (GSDLHLHT) lie on the Cytoplasmic side of the membrane. A helical transmembrane segment spans residues 56–77 (PMYFFLANLSFVDMGLTSSTVT). Residues 78–98 (KMLVNIQTRHHTISYTGCLTQ) lie on the Extracellular side of the membrane. A disulfide bridge links Cys-95 with Cys-187. A helical transmembrane segment spans residues 99–118 (MYFFLMFGDLDSFFLAAMAY). Residues 119-137 (DRYVAICHPLCYSTVMRPQ) are Cytoplasmic-facing. The chain crosses the membrane as a helical span at residues 138 to 156 (VCALMLALCWVLTNIVALT). Over 157-194 (HTFLMARLSFCVTGEIAHFFCDITPVLKLSCSDTHINE) the chain is Extracellular. Residues 195–217 (MMVFVLGGTVLIVPFLCIVTSYI) form a helical membrane-spanning segment. Residues 218 to 234 (HIVPAILRVRTRGGVGK) lie on the Cytoplasmic side of the membrane. Residues 235–257 (AFSTCSSHLCVVCVFYGTLFSAY) form a helical membrane-spanning segment. The Extracellular segment spans residues 258–270 (LCPPSIASEEKDI). The chain crosses the membrane as a helical span at residues 271-290 (AAAAMYTIVTPMLNPFIYSL). Topologically, residues 291-311 (RNKDMKGALKRLFSHRSIVSS) are cytoplasmic.

It belongs to the G-protein coupled receptor 1 family.

It is found in the cell membrane. Its function is as follows. Odorant receptor. The chain is Olfactory receptor 1N1 (OR1N1) from Homo sapiens (Human).